Reading from the N-terminus, the 154-residue chain is Low molecular weight protein-tyrosine-phosphatase PtpA (154 aa).

Cysteine 8 (nucleophile) is an active-site residue. The active site involves arginine 14. Aspartate 120 acts as the Proton donor in catalysis.

The protein belongs to the low molecular weight phosphotyrosine protein phosphatase family.

It catalyses the reaction O-phospho-L-tyrosyl-[protein] + H2O = L-tyrosyl-[protein] + phosphate. Dephosphorylates the phosphotyrosine-containing proteins. This is Low molecular weight protein-tyrosine-phosphatase PtpA (ptpA) from Staphylococcus saprophyticus subsp. saprophyticus (strain ATCC 15305 / DSM 20229 / NCIMB 8711 / NCTC 7292 / S-41).